We begin with the raw amino-acid sequence, 414 residues long: Carbohydrate sulfotransferase 12 (414 aa).

At 1-5 the chain is on the cytoplasmic side; it reads MTKAR. Residues 6-26 form a helical; Signal-anchor for type II membrane protein membrane-spanning segment; it reads LFRLWLVLGSVFMILLIIVYW. Topologically, residues 27 to 414 are lumenal; the sequence is DSAGAAHFYL…YPKPENLLRD (388 aa). The disordered stretch occupies residues 80–125; that stretch reads QSDLPRKETEQPPAPGSMEESVRGYDWSPRDARRSPDQGRQQAERR. A compositionally biased stretch (basic and acidic residues) spans 99 to 125; the sequence is ESVRGYDWSPRDARRSPDQGRQQAERR. Residue asparagine 134 is glycosylated (N-linked (GlcNAc...) asparagine). 171 to 177 contacts 3'-phosphoadenylyl sulfate; the sequence is PKVACTN. An N-linked (GlcNAc...) asparagine glycan is attached at asparagine 209. A 3'-phosphoadenylyl sulfate-binding site is contributed by 245–253; it reads RDPFVRLIS. N-linked (GlcNAc...) asparagine glycans are attached at residues asparagine 280 and asparagine 370.

The protein belongs to the sulfotransferase 2 family. In terms of tissue distribution, widely expressed. Expressed a high level in spinal chord, heart, spleen, thyroid, pituitary gland, adrenal gland, peripheral blood leukocytes, thymus, lung, small intestine, fetal kidney, fetal spleen and fetal lung.

It is found in the golgi apparatus membrane. The catalysed reaction is chondroitin beta-D-glucuronate + n 3'-phosphoadenylyl sulfate = chondroitin 4'-sulfate + n adenosine 3',5'-bisphosphate + n H(+). Functionally, catalyzes the transfer of sulfate to position 4 of the N-acetylgalactosamine (GalNAc) residue of chondroitin and desulfated dermatan sulfate. Chondroitin sulfate constitutes the predominant proteoglycan present in cartilage and is distributed on the surfaces of many cells and extracellular matrices. Activity toward partially desulfated dermatan sulfate is however lower. Does not form 4, 6-di-O-sulfated GalNAc when chondroitin sulfate C is used as an acceptor. This is Carbohydrate sulfotransferase 12 (CHST12) from Homo sapiens (Human).